Reading from the N-terminus, the 339-residue chain is D-erythrose-4-phosphate dehydrogenase (339 aa).

NAD(+) is bound at residue 11 to 12; sequence RI. Residues 158-160, R204, 217-218, and R240 each bind substrate; these read SCT and TK. C159 (nucleophile) is an active-site residue. Residue N322 participates in NAD(+) binding.

The protein belongs to the glyceraldehyde-3-phosphate dehydrogenase family. Epd subfamily. In terms of assembly, homotetramer.

Its subcellular location is the cytoplasm. The catalysed reaction is D-erythrose 4-phosphate + NAD(+) + H2O = 4-phospho-D-erythronate + NADH + 2 H(+). The protein operates within cofactor biosynthesis; pyridoxine 5'-phosphate biosynthesis; pyridoxine 5'-phosphate from D-erythrose 4-phosphate: step 1/5. Functionally, catalyzes the NAD-dependent conversion of D-erythrose 4-phosphate to 4-phosphoerythronate. This chain is D-erythrose-4-phosphate dehydrogenase, found in Aliivibrio fischeri (strain ATCC 700601 / ES114) (Vibrio fischeri).